The following is a 116-amino-acid chain: Putative pterin-4-alpha-carbinolamine dehydratase 1 (116 aa).

The protein belongs to the pterin-4-alpha-carbinolamine dehydratase family.

The enzyme catalyses (4aS,6R)-4a-hydroxy-L-erythro-5,6,7,8-tetrahydrobiopterin = (6R)-L-erythro-6,7-dihydrobiopterin + H2O. The sequence is that of Putative pterin-4-alpha-carbinolamine dehydratase 1 from Cupriavidus pinatubonensis (strain JMP 134 / LMG 1197) (Cupriavidus necator (strain JMP 134)).